The chain runs to 1177 residues: Solute carrier family 9 member C1 (1177 aa).

Topologically, residues 1–17 are extracellular; that stretch reads MAGIFKEFFFSTEDLPE. A helical transmembrane segment spans residues 18–37; that stretch reads VILTLSLISSIGAFLNRHLE. At 38-42 the chain is on the cytoplasmic side; the sequence is DFPIP. Residues 43–60 traverse the membrane as a helical segment; it reads VPVILFLLGCSFEVLSFT. Topologically, residues 61-76 are extracellular; sequence SSQVQRYANAIQWMSP. Residues 77-93 form a helical membrane-spanning segment; it reads DLFFRIFTPVVFFTTAF. Residues 94-103 are Cytoplasmic-facing; that stretch reads DMDTYMLQKL. Residues 104-129 traverse the membrane as a helical segment; that stretch reads FWQILLISIPGFLVNYILVLWHLASV. Residues 104 to 191 form a transport core domain region; sequence FWQILLISIP…SLITFTSIMD (88 aa). At 130–135 the chain is on the extracellular side; it reads NQLLLK. Residues 136 to 161 traverse the membrane as a helical segment; it reads PTQWLLFSAILVSSDPMLTAAAIRDL. The Cytoplasmic portion of the chain corresponds to 162-164; it reads GLS. The helical transmembrane segment at 165 to 190 threads the bilayer; it reads RSLISLINGESLMTSVISLITFTSIM. Residues 191-204 are Extracellular-facing; that stretch reads DFDQRLQSKRNHTL. The chain crosses the membrane as a helical span at residues 205 to 236; the sequence is AEEIVGGICSYIIASFLFGILSSKLIQFWMST. The Cytoplasmic segment spans residues 237-240; that stretch reads VFGD. A helical membrane pass occupies residues 241-262; it reads DVNHISLIFSILYLIFYICELV. Residues 263–265 lie on the Extracellular side of the membrane; sequence GMS. A helical transmembrane segment spans residues 266-279; that stretch reads GIFTLAIVGLLLNS. Residues 280-286 are Cytoplasmic-facing; it reads TSFKAAI. Residues 287 to 319 form a helical membrane-spanning segment; the sequence is EETLLLEFWTFLSRIAFLMVFTFFGLLIPAHTY. The Extracellular portion of the chain corresponds to 320 to 324; the sequence is LYIEF. A helical transmembrane segment spans residues 325–354; sequence VDIYYSLNIYLTLIVLRFLTLLLISPVLSR. Residues 325 to 426 are transport core domain; that stretch reads VDIYYSLNIY…FILPVAVTIL (102 aa). Residues 355 to 360 lie on the Cytoplasmic side of the membrane; that stretch reads VGHEFS. A helical transmembrane segment spans residues 361–391; sequence WRWIFIMVCSEMKGMPNINMALLLAYSDLYF. Residues 392–395 are Extracellular-facing; sequence GSDK. The chain crosses the membrane as a helical span at residues 396 to 426; the sequence is EKSQILFHGVLVCLITLVVNRFILPVAVTIL. The Cytoplasmic segment spans residues 427–612; the sequence is GLRDATSTKY…ICHTIVFTEE (186 aa). Residues 598–678 are ion transport-like; sequence YFFFRICHTI…DFFSHAWNIF (81 aa). A helical transmembrane segment spans residues 613-633; it reads FEHVGYLVILMNIFPFIISWI. The Extracellular portion of the chain corresponds to 634 to 637; sequence SQLN. The helical transmembrane segment at 638–664 threads the bilayer; sequence VIYHSELKHTNYCFLTLYILEALLKIA. Residues 665-671 lie on the Cytoplasmic side of the membrane; sequence AMRKDFF. A helical membrane pass occupies residues 672-696; sequence SHAWNIFELAITLIGILHVILIEID. Residues 697-704 are Extracellular-facing; sequence TIKYIFNE. The chain crosses the membrane as a helical span at residues 705–731; the sequence is TEVIVFIKVVQFFRILRIFKLIAPKLL. Topologically, residues 732–1177 are cytoplasmic; it reads QIIDKRMSHQ…RINLRKVRKE (446 aa).

This sequence belongs to the monovalent cation:proton antiporter 1 (CPA1) transporter (TC 2.A.36) family. In terms of assembly, interacts with soluble adenylyl cyclase (sAC). As to expression, sperm.

Its subcellular location is the cell projection. The protein resides in the cilium. It is found in the flagellum membrane. Functionally, sperm-specific solute carrier involved in intracellular pH regulation of spermatozoa. Required for sperm motility and fertility. Involved in sperm cell hyperactivation, a step needed for sperm motility which is essential late in the preparation of sperm for fertilization. Required for the expression and bicarbonate regulation of the soluble adenylyl cyclase (sAC). The protein is Solute carrier family 9 member C1 (SLC9C1) of Homo sapiens (Human).